Reading from the N-terminus, the 2636-residue chain is Ankyrin repeat and KH domain-containing protein CBG24701 (2636 aa).

11 ANK repeats span residues S252–A281, N286–V317, N361–Q390, N435–E464, H468–A500, S505–T534, K536–Q564, Q566–F595, D598–F627, N632–L661, and D665–L695. 3 disordered regions span residues P994–E1030, K1172–K1191, and N1230–K1268. Residues Q1006 to E1030 show a composition bias toward polar residues. Over residues Q1233–Q1245 the composition is skewed to low complexity. Residues T1249 to K1260 show a composition bias toward basic and acidic residues. 10 ANK repeats span residues T1273–H1302, K1306–A1335, T1340–H1369, S1373–S1402, L1408–A1437, Y1447–H1476, T1480–A1509, T1515–N1546, K1548–M1577, and R1581–N1610. Residues R1638–A1696 are a coiled coil. Residues K1669–W1857 are disordered. Over residues K1670–K1686 the composition is skewed to basic residues. Residues P1698–E1708 are compositionally biased toward pro residues. Residues P1709 to A1722 are compositionally biased toward acidic residues. Over residues D1811–R1829 the composition is skewed to basic and acidic residues. The span at A1832 to S1851 shows a compositional bias: polar residues. The region spanning V1864–I1929 is the KH domain. Disordered regions lie at residues S1980–S2182, F2196–S2221, N2269–F2292, S2301–L2320, S2352–Q2417, M2444–Y2465, and G2539–M2636. The segment covering S1994–T2008 has biased composition (polar residues). Over residues T2025–P2045 the composition is skewed to low complexity. The span at S2057–Q2083 shows a compositional bias: polar residues. Composition is skewed to low complexity over residues Q2099 to Q2119 and Q2139 to Q2148. The segment covering P2167–S2179 has biased composition (pro residues). Positions N2269 to T2280 are enriched in low complexity. A compositionally biased stretch (polar residues) spans K2281–F2292. Composition is skewed to low complexity over residues Q2361 to P2373 and P2391 to Q2417. Composition is skewed to polar residues over residues N2449–Y2465, R2565–R2574, and Q2583–D2595. The span at R2599–Q2615 shows a compositional bias: low complexity. Over residues N2616–M2636 the composition is skewed to polar residues.

This sequence belongs to the mask family.

It is found in the cytoplasm. The chain is Ankyrin repeat and KH domain-containing protein CBG24701 from Caenorhabditis briggsae.